A 202-amino-acid chain; its full sequence is Protein phosphatase inhibitor 2 family member C (202 aa).

2 disordered regions span residues 1–51 (MSAS…DESS) and 71–118 (PGTS…EQES). The required for binding PPP1CC stretch occupies residues 12–17 (KGILKN). The segment covering 19–35 (SSSGSSVATSGQQSGGT) has biased composition (low complexity). The tract at residues 43–55 (KSQKWDESSILAA) is required for binding PPP1CC. The segment covering 71 to 80 (PGTSYMSVQD) has biased composition (polar residues). Residues 84-112 (DSVRDVEGEDSVRGVEGKEATDASDHSCE) show a composition bias toward basic and acidic residues. Residues 144–147 (HYNE) are required for binding PPP1CC catalytic center, displacing metal ions and inhibition of PPP1CC catalytic activity. The segment at 162 to 202 (LQSEDNENEETPQGTNEEKTAAEESEEAPLTGGLQTQSCDP) is disordered.

The protein belongs to the protein phosphatase inhibitor 2 family. In terms of tissue distribution, detected in sperm (at protein level).

In terms of biological role, functions as a protein phosphatase inhibitor. It inhibits activity of the catalytic subunit of PP1 and weakly inhibits the activity of myosin-associated phosphates. This Homo sapiens (Human) protein is Protein phosphatase inhibitor 2 family member C.